The primary structure comprises 457 residues: DNA repair protein RadA (457 aa).

Residues 10-27 form a C4-type zinc finger; it reads CQECGYESAKWMGKCPGC. Residue 97–104 participates in ATP binding; that stretch reads GDPGIGKS. The RadA KNRFG motif motif lies at 254 to 258; the sequence is KNRFG. The lon-protease-like stretch occupies residues 353 to 457; that stretch reads DAYVNVAGGV…QDALEVTLGR (105 aa).

Belongs to the RecA family. RadA subfamily.

In terms of biological role, DNA-dependent ATPase involved in processing of recombination intermediates, plays a role in repairing DNA breaks. Stimulates the branch migration of RecA-mediated strand transfer reactions, allowing the 3' invading strand to extend heteroduplex DNA faster. Binds ssDNA in the presence of ADP but not other nucleotides, has ATPase activity that is stimulated by ssDNA and various branched DNA structures, but inhibited by SSB. Does not have RecA's homology-searching function. The sequence is that of DNA repair protein RadA from Halalkalibacterium halodurans (strain ATCC BAA-125 / DSM 18197 / FERM 7344 / JCM 9153 / C-125) (Bacillus halodurans).